Reading from the N-terminus, the 356-residue chain is UDP-N-acetylglucosamine--N-acetylmuramyl-(pentapeptide) pyrophosphoryl-undecaprenol N-acetylglucosamine transferase (356 aa).

UDP-N-acetyl-alpha-D-glucosamine is bound by residues 15 to 17 (TGG), Asn127, Arg163, Ser191, Ile244, 263 to 268 (ALTVSE), and Gln288.

The protein belongs to the glycosyltransferase 28 family. MurG subfamily.

It localises to the cell inner membrane. It catalyses the reaction di-trans,octa-cis-undecaprenyl diphospho-N-acetyl-alpha-D-muramoyl-L-alanyl-D-glutamyl-meso-2,6-diaminopimeloyl-D-alanyl-D-alanine + UDP-N-acetyl-alpha-D-glucosamine = di-trans,octa-cis-undecaprenyl diphospho-[N-acetyl-alpha-D-glucosaminyl-(1-&gt;4)]-N-acetyl-alpha-D-muramoyl-L-alanyl-D-glutamyl-meso-2,6-diaminopimeloyl-D-alanyl-D-alanine + UDP + H(+). It participates in cell wall biogenesis; peptidoglycan biosynthesis. Functionally, cell wall formation. Catalyzes the transfer of a GlcNAc subunit on undecaprenyl-pyrophosphoryl-MurNAc-pentapeptide (lipid intermediate I) to form undecaprenyl-pyrophosphoryl-MurNAc-(pentapeptide)GlcNAc (lipid intermediate II). This Klebsiella pneumoniae subsp. pneumoniae (strain ATCC 700721 / MGH 78578) protein is UDP-N-acetylglucosamine--N-acetylmuramyl-(pentapeptide) pyrophosphoryl-undecaprenol N-acetylglucosamine transferase.